We begin with the raw amino-acid sequence, 133 residues long: Small ribosomal subunit protein uS8 (133 aa).

The protein belongs to the universal ribosomal protein uS8 family. In terms of assembly, part of the 30S ribosomal subunit. Contacts proteins S5 and S12.

In terms of biological role, one of the primary rRNA binding proteins, it binds directly to 16S rRNA central domain where it helps coordinate assembly of the platform of the 30S subunit. In Rippkaea orientalis (strain PCC 8801 / RF-1) (Cyanothece sp. (strain PCC 8801)), this protein is Small ribosomal subunit protein uS8.